A 210-amino-acid polypeptide reads, in one-letter code: MHRLFGRKPPTQPTASLTDAIDSLDKRSDSVEVKIAKLDAQLSVFQQKIANTRPGPGQTALKQRAMNVLRQKKIYESQLQQLQQQSFNMEQAAMTTESLKNTMATVQTMQETARQLKSQSKNVSIEKIEKLQDEIQDYMDAAGELNEVLGQNMTDINVDEEELDAELEALQQESSWLGDQSTAEKPSYLMPSNELPNFVDEEVAEPSTAQ.

Disordered regions lie at residues 1 to 21 and 168 to 210; these read MHRL…TDAI and EALQ…STAQ. A coiled-coil region spans residues 21-175; the sequence is IDSLDKRSDS…ELEALQQESS (155 aa). Over residues 174 to 184 the composition is skewed to polar residues; sequence SSWLGDQSTAE.

It belongs to the SNF7 family.

This is an uncharacterized protein from Schizosaccharomyces pombe (strain 972 / ATCC 24843) (Fission yeast).